We begin with the raw amino-acid sequence, 479 residues long: Citrate synthase, mitochondrial (479 aa).

Residues 1-37 (MSAILSTTSKSFLSRGSTRQCQNMQKALFALLNARHY) constitute a mitochondrion transit peptide. Residues His312, His358, and Asp413 contribute to the active site. Position 462 is a phosphoserine (Ser462).

This sequence belongs to the citrate synthase family. Monomer and homodimer. Exists as an inactive monomer when phosphorylated. Homodimerization is dependent on dephosphorylation of Ser-462 by PTC7 and is required for activity. Phosphorylation at Ser-462. Dephosphorylated at Ser-462 by PTC7.

The protein resides in the mitochondrion matrix. It carries out the reaction oxaloacetate + acetyl-CoA + H2O = citrate + CoA + H(+). The protein operates within carbohydrate metabolism; tricarboxylic acid cycle; isocitrate from oxaloacetate: step 1/2. With respect to regulation, phosphorylation at Ser-462 inhibits catalytic activity. Dephosphorylation at Ser-462 by PTC7 enhances catalytic activity. In terms of biological role, specific citrate synthase with catalytic activity only with acetyl-CoA. The sequence is that of Citrate synthase, mitochondrial from Saccharomyces cerevisiae (strain ATCC 204508 / S288c) (Baker's yeast).